The sequence spans 267 residues: Hemin import ATP-binding protein HmuV (267 aa).

One can recognise an ABC transporter domain in the interval 3–243 (LEVRGIEVWR…ELVARVFGLR (241 aa)). 35–42 (GPNGAGKS) serves as a coordination point for ATP.

The protein belongs to the ABC transporter superfamily. Heme (hemin) importer (TC 3.A.1.14.5) family. In terms of assembly, the complex is composed of two ATP-binding proteins (HmuV), two transmembrane proteins (HmuU) and a solute-binding protein (HmuT).

It localises to the cell inner membrane. Functionally, part of the ABC transporter complex HmuTUV involved in hemin import. Responsible for energy coupling to the transport system. The protein is Hemin import ATP-binding protein HmuV of Myxococcus xanthus (strain DK1622).